The sequence spans 308 residues: MIPMDVVLIVLILVLVGYFSKIFGILKEEHAKILNNIVIYIAMPSTIFLTISKNVSSSQILEFLKLPVVIFLCCLFVGILAYLLGKHIFKLKDEKLGGLILVSMLGNTGFLGYPVALGMFGEEGLARAIFCDLGGVFATMLLGTYVGIRFGKGRDKSILKDMAKFPPLITGILSIILVFFGFKLNYIPSFILKSLNYLSSATVPLIMMSLGLSLSPKALKFGVFWGIIASIFRFIVSPATAFTLSELINIKGLEKNVLLVESSMPSAMMTLVLGTLYELDIKLIASSIFITTTFSLLVIALWGWILLN.

The next 10 membrane-spanning stretches (helical) occupy residues 6–26, 31–51, 63–83, 100–120, 128–148, 162–182, 195–215, 221–241, 257–277, and 287–307; these read VVLI…FGIL, AKIL…FLTI, FLKL…LAYL, ILVS…LGMF, AIFC…YVGI, MAKF…FFGF, LNYL…LSLS, FGVF…PATA, VLLV…GTLY, and SIFI…WILL.

This sequence belongs to the auxin efflux carrier (TC 2.A.69) family.

It localises to the cell membrane. This is an uncharacterized protein from Methanocaldococcus jannaschii (strain ATCC 43067 / DSM 2661 / JAL-1 / JCM 10045 / NBRC 100440) (Methanococcus jannaschii).